A 338-amino-acid chain; its full sequence is MQIFYDKDCDLSIIQGKKVAIIGYGSQGHAHALNLKDSGVDVTVGLRANSASWKKAENAGLKVAEVPEAVKQADLVMILTPDEFQSQLYRDVIEPNIKEGATLAFAHGFSVLYNQVVPRQDLDVIMVAPKAPGHTVRSEFQRGSGVPDLIAIHQDASGNARNVALSYASGVGGGRTGIIETSFREETETDLFGEQAVLCGGAVELVKMGFETLVEAGYSPEMAYFECLHELKLIVDLMFEGGIADMNYSVSNNAEYGEYVTGVEVINEQSREAMRNALKRIQSGEYAKMFIQEGALNYPSMTARRRQNAAHGIEVTGSKLRAMMPWIQANKIVDKEKN.

One can recognise a KARI N-terminal Rossmann domain in the interval 1-181; the sequence is MQIFYDKDCD…GGGRTGIIET (181 aa). NADP(+) is bound by residues 24–27, R47, S50, S52, and 82–85; these read YGSQ and DEFQ. Residue H107 is part of the active site. G133 contacts NADP(+). The KARI C-terminal knotted domain maps to 182–327; sequence SFREETETDL…SKLRAMMPWI (146 aa). Positions 190, 194, 226, and 230 each coordinate Mg(2+). S251 is a substrate binding site.

It belongs to the ketol-acid reductoisomerase family. Mg(2+) serves as cofactor.

It carries out the reaction (2R)-2,3-dihydroxy-3-methylbutanoate + NADP(+) = (2S)-2-acetolactate + NADPH + H(+). It catalyses the reaction (2R,3R)-2,3-dihydroxy-3-methylpentanoate + NADP(+) = (S)-2-ethyl-2-hydroxy-3-oxobutanoate + NADPH + H(+). The protein operates within amino-acid biosynthesis; L-isoleucine biosynthesis; L-isoleucine from 2-oxobutanoate: step 2/4. Its pathway is amino-acid biosynthesis; L-valine biosynthesis; L-valine from pyruvate: step 2/4. In terms of biological role, involved in the biosynthesis of branched-chain amino acids (BCAA). Catalyzes an alkyl-migration followed by a ketol-acid reduction of (S)-2-acetolactate (S2AL) to yield (R)-2,3-dihydroxy-isovalerate. In the isomerase reaction, S2AL is rearranged via a Mg-dependent methyl migration to produce 3-hydroxy-3-methyl-2-ketobutyrate (HMKB). In the reductase reaction, this 2-ketoacid undergoes a metal-dependent reduction by NADPH to yield (R)-2,3-dihydroxy-isovalerate. The polypeptide is Ketol-acid reductoisomerase (NADP(+)) (Acinetobacter baylyi (strain ATCC 33305 / BD413 / ADP1)).